The primary structure comprises 448 residues: MREILHIQGGQCGNQIGAKFWEVVCDEHGIDPTGRYTGTSDLQLERVNVYYNEASCGRFVPRAVLMDLEPGTMDSVRTGPYGQIFRPDNFVFGQSGAGNNWAKGHYTEGAELIDSVLDVVRKEAENCDCLQGFQVCHSLGGGTGSGMGTLLISKIREEYPDRMMLTFSVFPSPKVSDTVVEPYNATLSVHQLVENADECMVLDNEALYDICFRTLKLTTPSFGDLNHLISATMSGVTCCLRFPGQLNSDLRKLAVNLIPFPRLHFFMVGFAPLTSRGSQQYRALTVPELTQQMWDAKNMMCAADPRHGRYLTASAMFRGKMSTKEVDEQMINVQNKNSSYFVEWIPNNVKSSVCDIPPRGLSMASTFIGNSTSIQEMFRRVSEQFTAMFRRKAFLHWYTGEGMDEMEFTEAESNMNDLVSEYQQYQDATADEDGEYEDELDGQEEEDM.

Gln-11, Glu-69, Ser-138, Gly-142, Thr-143, Gly-144, Asn-204, and Asn-226 together coordinate GTP. Mg(2+) is bound at residue Glu-69. Residues 421–448 are disordered; it reads EYQQYQDATADEDGEYEDELDGQEEEDM. Positions 429-448 are enriched in acidic residues; that stretch reads TADEDGEYEDELDGQEEEDM.

It belongs to the tubulin family. As to quaternary structure, dimer of alpha and beta chains. A typical microtubule is a hollow water-filled tube with an outer diameter of 25 nm and an inner diameter of 15 nM. Alpha-beta heterodimers associate head-to-tail to form protofilaments running lengthwise along the microtubule wall with the beta-tubulin subunit facing the microtubule plus end conferring a structural polarity. Microtubules usually have 13 protofilaments but different protofilament numbers can be found in some organisms and specialized cells. Requires Mg(2+) as cofactor.

Its subcellular location is the cytoplasm. The protein resides in the cytoskeleton. Tubulin is the major constituent of microtubules, a cylinder consisting of laterally associated linear protofilaments composed of alpha- and beta-tubulin heterodimers. Microtubules grow by the addition of GTP-tubulin dimers to the microtubule end, where a stabilizing cap forms. Below the cap, tubulin dimers are in GDP-bound state, owing to GTPase activity of alpha-tubulin. The chain is Tubulin beta-2 chain (TUBB2) from Eleusine indica (Goosegrass).